The sequence spans 500 residues: MIAIYVRVSTEEQAIKGSSIDSQIEACIKKAGTKDVLKYADEGFSGELLERPALNRLREDASKGLISQVICYDPDRLSRKLMNQLIIDDELRKRNIPLIFVNGEYANSPEGQLFFAMRGAISEFEKAKIKERTSSGRLQKMKKGMIIKDSKLYGYKFVKEKRTLEILEEEAKIIRMIFNYFTDHKSPFFGRVNGIALHLTQMGVKTKKGAKVWHRQVVRQILMNSSYKGEHRQYKYDTEGSYVSKQAGNKSIIKIRPEEEQITVTIPAIVPAEQWDYAQELLGQSKRKHLSISPHNYLLSGLVRCGKCGNTMTGKKRKSHGKDYYVYTCRKNYSGAKDRGCGKEMSENKLNRHVWGEIFKFITNPQKYVSFKEAEQSNHLSDELELIEKEIEKTKKGRKRLLTLISLSDDDDLDIDEIKAQIIELQKKQNQLTEKCNEIQSKMKVLDDTSSSENALKRAIDYFQSIGADNLTLEDKKTIVNFIVKEVTIVDSDTIYIETY.

Residues 1-144 (MIAIYVRVST…SGRLQKMKKG (144 aa)) form the Resolvase/invertase-type recombinase catalytic domain. Serine 9 functions as the O-(5'-phospho-DNA)-serine intermediate in the catalytic mechanism. Residues 152-288 (LYGYKFVKEK…QELLGQSKRK (137 aa)) constitute a DNA-binding region (recombinase). Positions 372–448 (KEAEQSNHLS…IQSKMKVLDD (77 aa)) form a coiled coil.

This sequence in the N-terminal section; belongs to the site-specific recombinase resolvase family.

Its function is as follows. Putative site-specific recombinase having a very important role in sporulation. It probably plays a role in the recombination of SpoIIIC and SpoIVCB to form sigma K factor. This Bacillus subtilis (strain 168) protein is Putative DNA recombinase (cisA).